A 146-amino-acid polypeptide reads, in one-letter code: Hemoglobin subunit beta (146 aa).

The 145-residue stretch at 2–146 (HWTADEKQLI…VAHALALGYH (145 aa)) folds into the Globin domain. Heme b-binding residues include His-63 and His-92.

Belongs to the globin family. Heterotetramer of two alpha chains and two beta chains. In terms of tissue distribution, red blood cells.

Functionally, involved in oxygen transport from the lung to the various peripheral tissues. The protein is Hemoglobin subunit beta (HBB) of Chrysemys picta bellii (Western painted turtle).